Here is a 591-residue protein sequence, read N- to C-terminus: L-fucose isomerase (591 aa).

Active-site proton acceptor residues include Glu338 and Asp362. 3 residues coordinate Mn(2+): Glu338, Asp362, and His529.

The protein belongs to the L-fucose isomerase family. The cofactor is Mn(2+).

The protein resides in the cytoplasm. It catalyses the reaction L-fucose = L-fuculose. It functions in the pathway carbohydrate degradation; L-fucose degradation; L-lactaldehyde and glycerone phosphate from L-fucose: step 1/3. Converts the aldose L-fucose into the corresponding ketose L-fuculose. In Phocaeicola vulgatus (strain ATCC 8482 / DSM 1447 / JCM 5826 / CCUG 4940 / NBRC 14291 / NCTC 11154) (Bacteroides vulgatus), this protein is L-fucose isomerase.